Reading from the N-terminus, the 369-residue chain is Endoglucanase (369 aa).

An N-terminal signal peptide occupies residues 1–22; sequence MMTMLRGWITMIVMLTAINAQA. Glu-56 serves as the catalytic Proton donor. Asp-117 functions as the Nucleophile in the catalytic mechanism.

Belongs to the glycosyl hydrolase 8 (cellulase D) family.

The protein localises to the secreted. The catalysed reaction is Endohydrolysis of (1-&gt;4)-beta-D-glucosidic linkages in cellulose, lichenin and cereal beta-D-glucans.. The protein operates within glycan metabolism; bacterial cellulose biosynthesis. Hydrolyzes carboxymethylcellulose. This is Endoglucanase (bcsZ) from Salmonella typhi.